Consider the following 479-residue polypeptide: Mannose-1-phosphate guanylyltransferase RfbM (479 aa).

This sequence belongs to the mannose-6-phosphate isomerase type 2 family. Homodimer.

The enzyme catalyses alpha-D-mannose 1-phosphate + GTP + H(+) = GDP-alpha-D-mannose + diphosphate. The protein operates within nucleotide-sugar biosynthesis; GDP-alpha-D-mannose biosynthesis; GDP-alpha-D-mannose from alpha-D-mannose 1-phosphate (GTP route): step 1/1. It participates in bacterial outer membrane biogenesis; LPS O-antigen biosynthesis. Functionally, involved in GDP-mannose biosynthesis which serves as the activated sugar nucleotide precursor for mannose residues in cell surface polysaccharides. This enzyme participates in synthesis of the LPS group B O antigen. The protein is Mannose-1-phosphate guanylyltransferase RfbM (rfbM) of Salmonella typhimurium (strain LT2 / SGSC1412 / ATCC 700720).